A 278-amino-acid polypeptide reads, in one-letter code: HTH-type transcriptional regulator TsaQ1/TsaQ2 (278 aa).

The HTH iclR-type domain occupies 19 to 80; the sequence is VHSLAKGLEI…PRSRKLAMGA (62 aa). The segment at residues 40 to 59 is a DNA-binding region (H-T-H motif); that stretch reads NQQLVELTGLPKATVSRLTS. Residues 95-266 enclose the IclR-ED domain; that stretch reads LQRIARPHME…VQDIQAEMRA (172 aa).

Functionally, both copies function as additional regulators for the tsa locus, specifically for tsaT. This is HTH-type transcriptional regulator TsaQ1/TsaQ2 (tsaQ1) from Comamonas testosteroni (Pseudomonas testosteroni).